The sequence spans 586 residues: Aspartate--tRNA ligase (586 aa).

Residue Glu-171 participates in L-aspartate binding. The tract at residues 195–198 (QLFK) is aspartate. Arg-217 provides a ligand contact to L-aspartate. ATP-binding positions include 217-219 (RDE) and Gln-226. L-aspartate is bound at residue His-448. Glu-482 serves as a coordination point for ATP. Arg-489 contacts L-aspartate. 534–537 (GLDR) provides a ligand contact to ATP.

Belongs to the class-II aminoacyl-tRNA synthetase family. Type 1 subfamily. In terms of assembly, homodimer.

The protein resides in the cytoplasm. The enzyme catalyses tRNA(Asp) + L-aspartate + ATP = L-aspartyl-tRNA(Asp) + AMP + diphosphate. In terms of biological role, catalyzes the attachment of L-aspartate to tRNA(Asp) in a two-step reaction: L-aspartate is first activated by ATP to form Asp-AMP and then transferred to the acceptor end of tRNA(Asp). This chain is Aspartate--tRNA ligase, found in Buchnera aphidicola subsp. Acyrthosiphon pisum (strain 5A).